Reading from the N-terminus, the 556-residue chain is Formate--tetrahydrofolate ligase (556 aa).

Thr-65–Thr-72 lines the ATP pocket.

The protein belongs to the formate--tetrahydrofolate ligase family.

The enzyme catalyses (6S)-5,6,7,8-tetrahydrofolate + formate + ATP = (6R)-10-formyltetrahydrofolate + ADP + phosphate. It functions in the pathway one-carbon metabolism; tetrahydrofolate interconversion. The chain is Formate--tetrahydrofolate ligase from Acetivibrio thermocellus (strain ATCC 27405 / DSM 1237 / JCM 9322 / NBRC 103400 / NCIMB 10682 / NRRL B-4536 / VPI 7372) (Clostridium thermocellum).